Consider the following 290-residue polypeptide: Ribosomal RNA small subunit methyltransferase A (290 aa).

Residues N27, L29, G54, E75, D100, and N125 each contribute to the S-adenosyl-L-methionine site.

It belongs to the class I-like SAM-binding methyltransferase superfamily. rRNA adenine N(6)-methyltransferase family. RsmA subfamily.

Its subcellular location is the cytoplasm. The catalysed reaction is adenosine(1518)/adenosine(1519) in 16S rRNA + 4 S-adenosyl-L-methionine = N(6)-dimethyladenosine(1518)/N(6)-dimethyladenosine(1519) in 16S rRNA + 4 S-adenosyl-L-homocysteine + 4 H(+). Its function is as follows. Specifically dimethylates two adjacent adenosines (A1518 and A1519) in the loop of a conserved hairpin near the 3'-end of 16S rRNA in the 30S particle. May play a critical role in biogenesis of 30S subunits. In Streptococcus agalactiae serotype V (strain ATCC BAA-611 / 2603 V/R), this protein is Ribosomal RNA small subunit methyltransferase A.